We begin with the raw amino-acid sequence, 94 residues long: Cell division protein FtsB (94 aa).

The Cytoplasmic segment spans residues 1–3 (MRT). A helical transmembrane segment spans residues 4 to 21 (FAIFLLIALGWLQYTLWF). Over 22–94 (GKNGMSDYAQ…YRIIDENSEG (73 aa)) the chain is Periplasmic. The stretch at 33 to 71 (SNDVALQEEVNQGLRNRNEQMFAEIDDLKKGSEAIEERA) forms a coiled coil.

This sequence belongs to the FtsB family. As to quaternary structure, part of a complex composed of FtsB, FtsL and FtsQ.

The protein resides in the cell inner membrane. In terms of biological role, essential cell division protein. May link together the upstream cell division proteins, which are predominantly cytoplasmic, with the downstream cell division proteins, which are predominantly periplasmic. The polypeptide is Cell division protein FtsB (Aliivibrio fischeri (strain ATCC 700601 / ES114) (Vibrio fischeri)).